The following is a 206-amino-acid chain: Small ribosomal subunit protein uS4 (206 aa).

Positions 96–161 constitute an S4 RNA-binding domain; that stretch reads RRLDNVVYRM…QGRIQAALAL (66 aa).

The protein belongs to the universal ribosomal protein uS4 family. In terms of assembly, part of the 30S ribosomal subunit. Contacts protein S5. The interaction surface between S4 and S5 is involved in control of translational fidelity.

One of the primary rRNA binding proteins, it binds directly to 16S rRNA where it nucleates assembly of the body of the 30S subunit. Functionally, with S5 and S12 plays an important role in translational accuracy. The polypeptide is Small ribosomal subunit protein uS4 (Legionella pneumophila (strain Paris)).